We begin with the raw amino-acid sequence, 395 residues long: MAKKTIRDIDWSGKRALVRVDFNVPLENGQITDDTRIRAALPTIRYLLEHGAAVILMSHLGRPKNKVVESMRLAPVVARLAELLPEAKAVKGSQATTGPAAEAAARDLKPGEVLVLENTRFDPREEANDESMARELAKLGDVYVNDAFGSAHRAHASTEGVARFLPAVAGFLMEAELAALQGALENPARPFVTIIGGAKISDKIGVIENLLGKVDALLIGGGMANTFLLAQGHEMGDSLVEPDSAPIAKSLLDQAAQRGVRLMLPTDVVIADAFSADANRKVVPVGEIPPGWRALDIGPETIRAYTEVITGAQTVIWNGPMGVFELAPFAEGTRAIAQAMANCPGMTIIGGGDSVAAIEQMGLADKIRHISTGGGASLELLEGRILPGVAALNDA.

Residues 21-23, Arg36, 59-62, Arg120, and Arg153 each bind substrate; these read DFN and HLGR. ATP is bound by residues Lys203, Glu325, and 351–354; that span reads GGDS.

The protein belongs to the phosphoglycerate kinase family. Monomer.

The protein localises to the cytoplasm. The catalysed reaction is (2R)-3-phosphoglycerate + ATP = (2R)-3-phospho-glyceroyl phosphate + ADP. The protein operates within carbohydrate degradation; glycolysis; pyruvate from D-glyceraldehyde 3-phosphate: step 2/5. The sequence is that of Phosphoglycerate kinase from Roseiflexus castenholzii (strain DSM 13941 / HLO8).